We begin with the raw amino-acid sequence, 135 residues long: Fatty acid-binding protein 5 (135 aa).

Position 2 is an N-acetylalanine (A2). S3 carries the phosphoserine modification. The Nuclear localization signal motif lies at 24 to 34 (KELGVGLALRK). N-eicosanoyl ethanolamine contacts are provided by C43 and R109. C120 and C127 are disulfide-bonded. Residue 129–131 (RVY) participates in (9Z,12Z)-octadecadienoate binding. Position 131 (Y131) interacts with N-eicosanoyl ethanolamine. Y131 lines the hexadecanoate pocket. The residue at position 131 (Y131) is a Phosphotyrosine.

Belongs to the calycin superfamily. Fatty-acid binding protein (FABP) family. In terms of assembly, monomer.

The protein resides in the cytoplasm. Its subcellular location is the nucleus. The protein localises to the synapse. It is found in the postsynaptic density. It localises to the secreted. It carries out the reaction hexadecanoate(out) = hexadecanoate(in). The catalysed reaction is (9Z,12Z)-octadecadienoate(out) = (9Z,12Z)-octadecadienoate(in). It catalyses the reaction (9Z)-octadecenoate(out) = (9Z)-octadecenoate(in). Its function is as follows. Intracellular carrier for long-chain fatty acids and related active lipids, such as endocannabinoids, that regulate the metabolism and actions of the ligands they bind. In addition to the cytosolic transport, selectively delivers specific fatty acids from the cytosol to the nucleus, wherein they activate nuclear receptors. Delivers retinoic acid to the nuclear receptor peroxisome proliferator-activated receptor delta; which promotes proliferation and survival. May also serve as a synaptic carrier of endocannabinoid at central synapses and thus controls retrograde endocannabinoid signaling. Modulates inflammation by regulating PTGES induction via NF-kappa-B activation, and prostaglandin E2 (PGE2) biosynthesis during inflammation. In Rattus norvegicus (Rat), this protein is Fatty acid-binding protein 5.